The chain runs to 211 residues: Phosphoserine phosphatase (211 aa).

The Nucleophile role is filled by D11. The Mg(2+) site is built by D11 and D13. D13 acts as the Proton donor in catalysis. Substrate is bound by residues E20, R56, S99–G100, and K144. D167 serves as a coordination point for Mg(2+). Substrate is bound at residue N170.

The protein belongs to the HAD-like hydrolase superfamily. SerB family. Mg(2+) serves as cofactor.

It catalyses the reaction O-phospho-L-serine + H2O = L-serine + phosphate. The catalysed reaction is O-phospho-D-serine + H2O = D-serine + phosphate. It functions in the pathway amino-acid biosynthesis; L-serine biosynthesis; L-serine from 3-phospho-D-glycerate: step 3/3. This is Phosphoserine phosphatase from Methanocaldococcus jannaschii (strain ATCC 43067 / DSM 2661 / JAL-1 / JCM 10045 / NBRC 100440) (Methanococcus jannaschii).